Reading from the N-terminus, the 497-residue chain is Aldehyde dehydrogenase (497 aa).

An NAD(+)-binding site is contributed by Gly-241–Gly-246. Residue Glu-264 is the Proton acceptor of the active site. Cys-298 (nucleophile) is an active-site residue.

The protein belongs to the aldehyde dehydrogenase family.

The enzyme catalyses an aldehyde + NAD(+) + H2O = a carboxylate + NADH + 2 H(+). It participates in alcohol metabolism; ethanol degradation; acetate from ethanol: step 2/2. This is Aldehyde dehydrogenase (aldA) from Emericella nidulans (strain FGSC A4 / ATCC 38163 / CBS 112.46 / NRRL 194 / M139) (Aspergillus nidulans).